Here is a 1629-residue protein sequence, read N- to C-terminus: Ferredoxin-dependent glutamate synthase 2, chloroplastic (1629 aa).

The transit peptide at 1-107 (MALQSPGATG…LEDIISERGA (107 aa)) directs the protein to the chloroplast. Cysteine 108 (for GATase activity) is an active-site residue. The Glutamine amidotransferase type-2 domain maps to 108 to 507 (CGVGFIANLE…PGMMISVDLE (400 aa)). Position 1186–1243 (1186–1243 (LAETQKTLIGNGLRERVIIRVDGGFKSGVDVLIAAAMGADEYGFGTLAMIATGCIMAR)) interacts with FMN. 3 residues coordinate [3Fe-4S] cluster: cysteine 1239, cysteine 1245, and cysteine 1250. The tract at residues 1599–1629 (SEEDTPEANSDHILKTTTGDEEQVSSTLAEK) is disordered.

It belongs to the glutamate synthase family. Requires [3Fe-4S] cluster as cofactor. It depends on FAD as a cofactor. FMN serves as cofactor. As to expression, expressed predominantly in roots and slightly in leaves. Low expression in the leaf mesophyll and phloem companion cell-sieve element complex.

The protein localises to the plastid. It is found in the chloroplast stroma. The enzyme catalyses 2 oxidized [2Fe-2S]-[ferredoxin] + 2 L-glutamate = L-glutamine + 2 reduced [2Fe-2S]-[ferredoxin] + 2-oxoglutarate + 2 H(+). The protein operates within amino-acid biosynthesis; L-glutamate biosynthesis via GLT pathway; L-glutamate from 2-oxoglutarate and L-glutamine (ferredoxin route): step 1/1. It functions in the pathway energy metabolism; nitrogen metabolism. Its function is as follows. May play a role in primary nitrogen assimilation in roots. Could supply a constitutive level of glutamate to maintain a basal level of protein synthesis. This is Ferredoxin-dependent glutamate synthase 2, chloroplastic (GLU2) from Arabidopsis thaliana (Mouse-ear cress).